Consider the following 612-residue polypeptide: Cytokine-like nuclear factor N-PAC (612 aa).

The region spanning 22-81 (PKDLIWAKMKGFTPWPGMIVEPPLDLLTQQRRANTKCVFFFGSRNFAWIEENNIKPFEGP) is the PWWP domain. Positions 168 to 270 (AVEGENNADS…GASSSSPTAR (103 aa)) are disordered. Composition is skewed to low complexity over residues 177-193 (SSAS…TAKS) and 201-220 (AKPV…TTKS). Polar residues predominate over residues 228-240 (AHQTPTGANTSGL). The interval 276-279 (DDLL) is interaction with histone H3. The segment at 319 to 612 (RDIVPSELTF…SSAVFVRSRF (294 aa)) is dehydrogenase domain. Residues 329 to 343 (GFLG…IVKD), threonine 421, and arginine 564 each bind NAD(+).

This sequence belongs to the HIBADH-related family. NP60 subfamily. As to quaternary structure, binds to mononucleosomes. Interacts with male-specific lethal (MSL) histone acetyltransferase complex at least composed of mof, msl-1, msl-2 and msl-3.

Its subcellular location is the chromosome. Nucleosome-destabilizing factor that is recruited to genes during transcriptional activation and colocalizes with a subset of trimethylated 'Lys-36' histone H3 (H3K36me3)-enriched regions. Binds DNA (in vitro). Facilitates Pol II transcription through nucleosomes. Facilitates male-specific lethal (MSL) histone acetyltransferase complex targeting to active genes on the X chromosome. Stimulates the acetylation of 'Lys-56' of nucleosomal histone H3 (H3K56ac) by nej. This Drosophila pseudoobscura pseudoobscura (Fruit fly) protein is Cytokine-like nuclear factor N-PAC.